The following is a 343-amino-acid chain: Putative trace amine-associated receptor 3 (343 aa).

Residues 1 to 35 (MDLTYIPEDLSSCPKFVNKILSSHQPLFSCPGDNV) are Extracellular-facing. The helical transmembrane segment at 36-56 (FGYDWSHDYPLFGNLVIMVSI) threads the bilayer. Residues 57-68 (SHFKQLHSPTNF) are Cytoplasmic-facing. The chain crosses the membrane as a helical span at residues 69–89 (LILSMATTDFLLGFVIMPYSI). Residues 90–150 (MRSVESCWYF…TKMTNSTIKQ (61 aa)) are Extracellular-facing. C104 and C189 are joined by a disulfide. An N-linked (GlcNAc...) asparagine glycan is attached at N145. A helical transmembrane segment spans residues 151-168 (LLAFCWSVPALFSFGLVL). Over 169-172 (SEAD) the chain is Cytoplasmic. The interval 173 to 186 (VSGMQSYKILVACF) is extracellular Loop 2 (ECL2). The helical transmembrane segment at 173–193 (VSGMQSYKILVACFNFCALTF) threads the bilayer. Residues 194-198 (NKFWG) lie on the Extracellular side of the membrane. A helical transmembrane segment spans residues 199-223 (TILFTTCFFTPGSIMVGIYGKIFIV). The Cytoplasmic segment spans residues 224-257 (SKQHARVISHVPENTKGAVKKHLSKKKDRKAAKT). Residues 258–278 (LGIVMGVFLACWLPCFLAVLI) form a helical membrane-spanning segment. Over 279 to 287 (DPYLDYSTP) the chain is Extracellular. A helical membrane pass occupies residues 288–308 (ILILDLLVWLRYFNSTCNPLI). Over 309–343 (HGFFNPWFQKAFKYIVSGKIFSSHSETANLFPEAH) the chain is Cytoplasmic.

The protein belongs to the G-protein coupled receptor 1 family. Not expressed in the pons, thalamus, globus pallidus, caudate, putamen or cerebellum.

Its subcellular location is the cell membrane. Its function is as follows. Putative olfactory receptor activated by several primary trace amines. This is Putative trace amine-associated receptor 3 from Homo sapiens (Human).